Consider the following 276-residue polypeptide: Melibiose/raffinose/stachyose import permease protein MelC (276 aa).

6 helical membrane-spanning segments follow: residues 11–31, 74–94, 104–124, 139–159, 186–206, and 240–260; these read IITL…YILL, IITG…AYPL, AVFA…MVPL, IAIF…YSGF, IVFP…CVFI, and LHLV…LFLA. Residues 69-261 form the ABC transmembrane type-1 domain; that stretch reads FINTMIITGF…LPMVVLFLAL (193 aa).

This sequence belongs to the binding-protein-dependent transport system permease family. In terms of assembly, the complex is composed of two ATP-binding proteins (MsmX), two transmembrane proteins (MelC and MelD) and a solute-binding protein (MelE).

The protein localises to the cell membrane. Its function is as follows. Part of the ABC transporter complex MelEDC-MsmX involved in melibiose, raffinose and stachyose import. Probably responsible for the translocation of the substrate across the membrane. This is Melibiose/raffinose/stachyose import permease protein MelC from Bacillus subtilis (strain 168).